The chain runs to 418 residues: D-amino acid dehydrogenase (418 aa).

3 to 17 (VTILGAGVVGVTSAW) serves as a coordination point for FAD.

This sequence belongs to the DadA oxidoreductase family. FAD is required as a cofactor.

It catalyses the reaction a D-alpha-amino acid + A + H2O = a 2-oxocarboxylate + AH2 + NH4(+). Its pathway is amino-acid degradation; D-alanine degradation; NH(3) and pyruvate from D-alanine: step 1/1. In terms of biological role, oxidative deamination of D-amino acids. In Agrobacterium fabrum (strain C58 / ATCC 33970) (Agrobacterium tumefaciens (strain C58)), this protein is D-amino acid dehydrogenase.